A 421-amino-acid chain; its full sequence is Histidine--tRNA ligase (421 aa).

The protein belongs to the class-II aminoacyl-tRNA synthetase family. In terms of assembly, homodimer.

The protein resides in the cytoplasm. The catalysed reaction is tRNA(His) + L-histidine + ATP = L-histidyl-tRNA(His) + AMP + diphosphate + H(+). The protein is Histidine--tRNA ligase of Ureaplasma urealyticum serovar 10 (strain ATCC 33699 / Western).